The chain runs to 100 residues: Small ubiquitin-related modifier 1 (100 aa).

The span at 1 to 12 (MSANQEEDKKPG) shows a compositional bias: basic and acidic residues. The tract at residues 1-21 (MSANQEEDKKPGDGGAHINLK) is disordered. Residues 16-93 (AHINLKVKGQ…IDAMLHQTGG (78 aa)) enclose the Ubiquitin-like domain. G93 participates in a covalent cross-link: Glycyl lysine isopeptide (Gly-Lys) (interchain with K-? in acceptor proteins).

The protein belongs to the ubiquitin family. SUMO subfamily. In terms of assembly, interacts with SAE2, SCE1, SIZ1 and MMS21. Interacts with HSFA2. Covalently attached to ABI5, FLD, GTE3, HSFA2 and ICE1.

It is found in the nucleus. Its subcellular location is the cytoplasm. In terms of biological role, ubiquitin-like protein which can be covalently attached to target lysines as a monomer. Does not seem to be involved in protein degradation and may function as an antagonist of ubiquitin in the degradation process. Required for the massive protein sumoylation in the nucleus induced by heat shock and controlled by SIZ1. Involved in the regulation of the heat stress transcription factor HSFA2 in acquired thermotolerance. In Arabidopsis thaliana (Mouse-ear cress), this protein is Small ubiquitin-related modifier 1.